Reading from the N-terminus, the 181-residue chain is Sodium/potassium-transporting ATPase subunit beta-1-interacting protein 3 (181 aa).

Transmembrane regions (helical) follow at residues 5 to 22, 35 to 55, 62 to 82, and 151 to 171; these read TGRCTLIFICTLQMLVAL, APILGNFLHIIVVILGLFGTI, IVAYTIWTAFWVAWNVFIICF, and AVQILLSLIGFVYACYVISVI.

It belongs to the NKAIN family. As to quaternary structure, interacts with atp1b1 C-terminus.

The protein localises to the cell membrane. The protein is Sodium/potassium-transporting ATPase subunit beta-1-interacting protein 3 (nkain3) of Xenopus tropicalis (Western clawed frog).